A 63-amino-acid chain; its full sequence is Protein sigN172 (63 aa).

In Dictyostelium discoideum (Social amoeba), this protein is Protein sigN172.